Here is an 896-residue protein sequence, read N- to C-terminus: FHIP family protein C05D11.8 (896 aa).

The tract at residues serine 823–aspartate 865 is disordered. The segment covering leucine 853–aspartate 865 has biased composition (basic and acidic residues).

It belongs to the FHIP family.

The protein is FHIP family protein C05D11.8 of Caenorhabditis elegans.